We begin with the raw amino-acid sequence, 204 residues long: Dephospho-CoA kinase (204 aa).

The DPCK domain maps to 3 to 204 (VIGLTGGIGS…DRLDLAYRAH (202 aa)). 11-16 (GSGKSY) is a binding site for ATP.

The protein belongs to the CoaE family.

The protein localises to the cytoplasm. The enzyme catalyses 3'-dephospho-CoA + ATP = ADP + CoA + H(+). Its pathway is cofactor biosynthesis; coenzyme A biosynthesis; CoA from (R)-pantothenate: step 5/5. Its function is as follows. Catalyzes the phosphorylation of the 3'-hydroxyl group of dephosphocoenzyme A to form coenzyme A. The chain is Dephospho-CoA kinase from Ralstonia nicotianae (strain ATCC BAA-1114 / GMI1000) (Ralstonia solanacearum).